A 196-amino-acid chain; its full sequence is GTP cyclohydrolase-2 (196 aa).

49-53 (RVHSE) provides a ligand contact to GTP. Positions 54, 65, and 67 each coordinate Zn(2+). GTP-binding positions include Q70, 92–94 (EGR), and T114. D126 functions as the Proton acceptor in the catalytic mechanism. R128 serves as the catalytic Nucleophile. The GTP site is built by T149 and K154.

Belongs to the GTP cyclohydrolase II family. As to quaternary structure, homodimer. Requires Zn(2+) as cofactor.

The catalysed reaction is GTP + 4 H2O = 2,5-diamino-6-hydroxy-4-(5-phosphoribosylamino)-pyrimidine + formate + 2 phosphate + 3 H(+). The protein operates within cofactor biosynthesis; riboflavin biosynthesis; 5-amino-6-(D-ribitylamino)uracil from GTP: step 1/4. In terms of biological role, catalyzes the conversion of GTP to 2,5-diamino-6-ribosylamino-4(3H)-pyrimidinone 5'-phosphate (DARP), formate and pyrophosphate. This chain is GTP cyclohydrolase-2, found in Citrobacter koseri (strain ATCC BAA-895 / CDC 4225-83 / SGSC4696).